Consider the following 390-residue polypeptide: Transaldolase (390 aa).

The active-site Schiff-base intermediate with substrate is lysine 135. 2 EF-hand domains span residues 329 to 364 (AFCH…FDAL) and 365 to 388 (DHDH…LALT). 10 residues coordinate Ca(2+): aspartate 342, aspartate 344, aspartate 346, cysteine 348, glutamate 353, aspartate 365, aspartate 367, aspartate 369, arginine 371, and aspartate 376.

Belongs to the transaldolase family. Type 1 subfamily.

The protein resides in the cytoplasm. The enzyme catalyses D-sedoheptulose 7-phosphate + D-glyceraldehyde 3-phosphate = D-erythrose 4-phosphate + beta-D-fructose 6-phosphate. It functions in the pathway carbohydrate degradation; pentose phosphate pathway; D-glyceraldehyde 3-phosphate and beta-D-fructose 6-phosphate from D-ribose 5-phosphate and D-xylulose 5-phosphate (non-oxidative stage): step 2/3. In terms of biological role, transaldolase is important for the balance of metabolites in the pentose-phosphate pathway. This chain is Transaldolase, found in Prochlorococcus marinus (strain MIT 9313).